A 203-amino-acid polypeptide reads, in one-letter code: Imidazoleglycerol-phosphate dehydratase (203 aa).

This sequence belongs to the imidazoleglycerol-phosphate dehydratase family.

The protein localises to the cytoplasm. The enzyme catalyses D-erythro-1-(imidazol-4-yl)glycerol 3-phosphate = 3-(imidazol-4-yl)-2-oxopropyl phosphate + H2O. It functions in the pathway amino-acid biosynthesis; L-histidine biosynthesis; L-histidine from 5-phospho-alpha-D-ribose 1-diphosphate: step 6/9. The protein is Imidazoleglycerol-phosphate dehydratase of Parvibaculum lavamentivorans (strain DS-1 / DSM 13023 / NCIMB 13966).